The sequence spans 347 residues: MREQSSYKDAGVDIDKANLFISRIIPLIKMTSRKEVMKGIGGFGGLFHLDLKKIKDPVLVAATDGVGTKIKIAQMMNKHDTVGIDLVAMSVNDIIVQGAEPIFFLDYIAIGQMDVERNVKLIEGIVKGCQEAGCALIGGETAEMPGIYSENEYDLAGFCIGVVENGRIIDGSDIRVGDRVIGIASNGIHSNGYSLVRKVIFDKAKLNVDDTIEGIENSIGEELLRPTRIYVKPVLNLMKSFNIKGIVHITGGGFVDNIPRIVPNQCCTVIRMNSWQIPPIFSIIQELGDIDQMEMVRVFNMGIGMILIVSEKETDDIVERLNMLGEKAYIIGSIEKADGEKSAVSFT.

The protein belongs to the AIR synthase family.

It localises to the cytoplasm. The catalysed reaction is 2-formamido-N(1)-(5-O-phospho-beta-D-ribosyl)acetamidine + ATP = 5-amino-1-(5-phospho-beta-D-ribosyl)imidazole + ADP + phosphate + H(+). It functions in the pathway purine metabolism; IMP biosynthesis via de novo pathway; 5-amino-1-(5-phospho-D-ribosyl)imidazole from N(2)-formyl-N(1)-(5-phospho-D-ribosyl)glycinamide: step 2/2. The chain is Phosphoribosylformylglycinamidine cyclo-ligase from Syntrophus aciditrophicus (strain SB).